Reading from the N-terminus, the 223-residue chain is Urease subunit alpha (223 aa).

The urease gamma stretch occupies residues 1 to 101 (MHFTQQQLQR…LVTIHEPIAN (101 aa)). A urease beta region spans residues 102–223 (DDKIKAGEIF…LSKAKEKGFL (122 aa)).

This sequence in the N-terminal section; belongs to the urease gamma subunit family. It in the C-terminal section; belongs to the urease beta subunit family. Heterohexamer of 3 UreA (alpha) and 3 UreB (beta) subunits.

The protein resides in the cytoplasm. It carries out the reaction urea + 2 H2O + H(+) = hydrogencarbonate + 2 NH4(+). It functions in the pathway nitrogen metabolism; urea degradation; CO(2) and NH(3) from urea (urease route): step 1/1. The sequence is that of Urease subunit alpha from Campylobacter lari.